Consider the following 103-residue polypeptide: Large ribosomal subunit protein uL24 (103 aa).

Belongs to the universal ribosomal protein uL24 family. In terms of assembly, part of the 50S ribosomal subunit.

In terms of biological role, one of two assembly initiator proteins, it binds directly to the 5'-end of the 23S rRNA, where it nucleates assembly of the 50S subunit. Its function is as follows. One of the proteins that surrounds the polypeptide exit tunnel on the outside of the subunit. The sequence is that of Large ribosomal subunit protein uL24 from Haemophilus influenzae (strain ATCC 51907 / DSM 11121 / KW20 / Rd).